The chain runs to 207 residues: Superoxide dismutase [Mn] (207 aa).

Mn(2+)-binding residues include His28, His76, Asp160, and His164.

This sequence belongs to the iron/manganese superoxide dismutase family. Requires Mn(2+) as cofactor.

It carries out the reaction 2 superoxide + 2 H(+) = H2O2 + O2. Functionally, destroys superoxide anion radicals which are normally produced within the cells and which are toxic to biological systems. The sequence is that of Superoxide dismutase [Mn] (sodA) from Mycobacterium avium.